The primary structure comprises 295 residues: tRNA pseudouridine synthase A (295 aa).

Residue Asp67 is the Nucleophile of the active site. Position 125 (Tyr125) interacts with substrate.

It belongs to the tRNA pseudouridine synthase TruA family. In terms of assembly, homodimer.

It catalyses the reaction uridine(38/39/40) in tRNA = pseudouridine(38/39/40) in tRNA. Formation of pseudouridine at positions 38, 39 and 40 in the anticodon stem and loop of transfer RNAs. This chain is tRNA pseudouridine synthase A, found in Prochlorococcus marinus (strain MIT 9303).